The chain runs to 278 residues: Large ribosomal subunit protein uL2 (278 aa).

A disordered region spans residues 211–278 (KRWLGKRPQS…LIIRRRKGSK (68 aa)). Residues 258–270 (KTRDTKKASEKLI) show a composition bias toward basic and acidic residues.

The protein belongs to the universal ribosomal protein uL2 family. As to quaternary structure, part of the 50S ribosomal subunit. Forms a bridge to the 30S subunit in the 70S ribosome.

One of the primary rRNA binding proteins. Required for association of the 30S and 50S subunits to form the 70S ribosome, for tRNA binding and peptide bond formation. It has been suggested to have peptidyltransferase activity; this is somewhat controversial. Makes several contacts with the 16S rRNA in the 70S ribosome. The protein is Large ribosomal subunit protein uL2 of Lactobacillus helveticus (strain DPC 4571).